Here is an 893-residue protein sequence, read N- to C-terminus: TBC domain-containing protein kinase-like protein (893 aa).

In terms of domain architecture, Protein kinase spans 1–273 (MFPLKDAEMG…PDELMKDQVF (273 aa)). Positions 466–651 (DIPPLMRGLT…HLWDTLLLGN (186 aa)) constitute a Rab-GAP TBC domain.

Belongs to the protein kinase superfamily. Component of the FERRY complex composed of five subunits, TBCK, PPP1R21, FERRY3, CRYZL1 and GATD1 with a ratio of 1:2:1:2:4, respectively.

The protein localises to the cytoplasm. Its subcellular location is the cytoskeleton. The protein resides in the spindle. It localises to the midbody. It is found in the early endosome. Its function is as follows. Component of the FERRY complex (Five-subunit Endosomal Rab5 and RNA/ribosome intermediary). The FERRY complex directly interacts with mRNAs and RAB5A, and functions as a RAB5A effector involved in the localization and the distribution of specific mRNAs most likely by mediating their endosomal transport. The complex recruits mRNAs and ribosomes to early endosomes through direct mRNA-interaction. Also involved in the modulation of mTOR signaling and expression of mTOR complex components. Involved in the control of actin-cytoskeleton organization. In Mus musculus (Mouse), this protein is TBC domain-containing protein kinase-like protein (Tbck).